The primary structure comprises 274 residues: Outer surface protein A (274 aa).

The signal sequence occupies residues 1-16 (MKKYLLGIGLILALIA). The N-palmitoyl cysteine moiety is linked to residue cysteine 17. Cysteine 17 is lipidated: S-diacylglycerol cysteine.

It belongs to the OspA lipoprotein family.

It localises to the cell outer membrane. The protein resides in the cell surface. This chain is Outer surface protein A, found in Borreliella burgdorferi (Lyme disease spirochete).